The chain runs to 95 residues: Co-chaperonin GroES (95 aa).

The protein belongs to the GroES chaperonin family. As to quaternary structure, heptamer of 7 subunits arranged in a ring. Interacts with the chaperonin GroEL.

Its subcellular location is the cytoplasm. Functionally, together with the chaperonin GroEL, plays an essential role in assisting protein folding. The GroEL-GroES system forms a nano-cage that allows encapsulation of the non-native substrate proteins and provides a physical environment optimized to promote and accelerate protein folding. GroES binds to the apical surface of the GroEL ring, thereby capping the opening of the GroEL channel. This is Co-chaperonin GroES from Bordetella bronchiseptica (strain ATCC BAA-588 / NCTC 13252 / RB50) (Alcaligenes bronchisepticus).